The following is a 189-amino-acid chain: Ribosome maturation factor RimM (189 aa).

Positions 113–189 (DGEYYWVDLL…TIVADWQPDY (77 aa)) constitute a PRC barrel domain.

It belongs to the RimM family. As to quaternary structure, binds ribosomal protein uS19.

Its subcellular location is the cytoplasm. In terms of biological role, an accessory protein needed during the final step in the assembly of 30S ribosomal subunit, possibly for assembly of the head region. Essential for efficient processing of 16S rRNA. May be needed both before and after RbfA during the maturation of 16S rRNA. It has affinity for free ribosomal 30S subunits but not for 70S ribosomes. The protein is Ribosome maturation factor RimM of Delftia acidovorans (strain DSM 14801 / SPH-1).